We begin with the raw amino-acid sequence, 140 residues long: Heavy metal-associated isoprenylated plant protein 31 (140 aa).

The region spanning 3–67 (MTVEIRVPNL…AVRRAGKAAE (65 aa)) is the HMA domain. A metal cation-binding residues include C14 and C17. C137 carries the cysteine methyl ester modification. The S-farnesyl cysteine moiety is linked to residue C137. The propeptide at 138–140 (TIM) is removed in mature form.

The protein belongs to the HIPP family.

Heavy-metal-binding protein. This chain is Heavy metal-associated isoprenylated plant protein 31, found in Arabidopsis thaliana (Mouse-ear cress).